The following is a 378-amino-acid chain: Dihydroorotate dehydrogenase (quinone) (378 aa).

Residues 77 to 81 and threonine 101 contribute to the FMN site; that span reads AGFDK. Lysine 81 serves as a coordination point for substrate. 126–130 lines the substrate pocket; sequence NRMGF. Residues asparagine 158 and asparagine 191 each contribute to the FMN site. Substrate is bound at residue asparagine 191. Serine 194 functions as the Nucleophile in the catalytic mechanism. Asparagine 196 contacts substrate. Lysine 229 and threonine 257 together coordinate FMN. Residue 258–259 participates in substrate binding; the sequence is NT. FMN is bound by residues glycine 287, glycine 316, and 337 to 338; that span reads YT.

Belongs to the dihydroorotate dehydrogenase family. Type 2 subfamily. As to quaternary structure, monomer. FMN serves as cofactor.

The protein resides in the cell membrane. The catalysed reaction is (S)-dihydroorotate + a quinone = orotate + a quinol. It participates in pyrimidine metabolism; UMP biosynthesis via de novo pathway; orotate from (S)-dihydroorotate (quinone route): step 1/1. In terms of biological role, catalyzes the conversion of dihydroorotate to orotate with quinone as electron acceptor. In Synechococcus sp. (strain ATCC 27144 / PCC 6301 / SAUG 1402/1) (Anacystis nidulans), this protein is Dihydroorotate dehydrogenase (quinone).